The chain runs to 256 residues: 1-(5-phosphoribosyl)-5-[(5-phosphoribosylamino)methylideneamino] imidazole-4-carboxamide isomerase (256 aa).

Aspartate 8 (proton acceptor) is an active-site residue. The Proton donor role is filled by aspartate 130.

Belongs to the HisA/HisF family.

It is found in the cytoplasm. The catalysed reaction is 1-(5-phospho-beta-D-ribosyl)-5-[(5-phospho-beta-D-ribosylamino)methylideneamino]imidazole-4-carboxamide = 5-[(5-phospho-1-deoxy-D-ribulos-1-ylimino)methylamino]-1-(5-phospho-beta-D-ribosyl)imidazole-4-carboxamide. It functions in the pathway amino-acid biosynthesis; L-histidine biosynthesis; L-histidine from 5-phospho-alpha-D-ribose 1-diphosphate: step 4/9. This is 1-(5-phosphoribosyl)-5-[(5-phosphoribosylamino)methylideneamino] imidazole-4-carboxamide isomerase from Chlorobium luteolum (strain DSM 273 / BCRC 81028 / 2530) (Pelodictyon luteolum).